Consider the following 73-residue polypeptide: Large ribosomal subunit protein bL31 (73 aa).

This sequence belongs to the bacterial ribosomal protein bL31 family. Type A subfamily. In terms of assembly, part of the 50S ribosomal subunit.

Functionally, binds the 23S rRNA. The chain is Large ribosomal subunit protein bL31 from Cereibacter sphaeroides (strain ATCC 17029 / ATH 2.4.9) (Rhodobacter sphaeroides).